Here is a 382-residue protein sequence, read N- to C-terminus: Ubiquitin-like protease 4 (382 aa).

The tract at residues 46-106 (GTHLDGSIGE…DNDEWTNQKR (61 aa)) is disordered. The span at 84–100 (DLVDEDEEEEDEEDNDE) shows a compositional bias: acidic residues.

This sequence belongs to the peptidase C48 family. In terms of tissue distribution, expressed in hermaphrodite-specific neurons, head muscles, body wall muscles and pharyngeal cells.

The protein resides in the cytoplasm. It is found in the cytoskeleton. The protein localises to the microtubule organizing center. It localises to the centrosome. Its subcellular location is the nucleus. The protein resides in the mitochondrion matrix. It functions in the pathway protein modification; protein sumoylation. In terms of biological role, protease required for deconjugation of smo-1 conjugates from target proteins which is necessary for cell cycle progression. Required for respiration and the maintenance of normal mitochondrial homeostasis. In response to mitochondrial stress, required for the removal of smo-1 conjugates from the transcription factor dve-1, which promotes the translocation of dve-1 from the cytosol to the nucleus to initiate the mitochondrial unfolded protein response. Furthermore, removes the smo-1 conjugates from the transcription factor atfs-1 to promote its stability and activate the mitochondrial unfolded protein response. Also plays a role in promoting mitochondrial unfolded protein response-mediated innate immunity following infection with P.aeruginosa. The polypeptide is Ubiquitin-like protease 4 (Caenorhabditis elegans).